The chain runs to 114 residues: Small ribosomal subunit protein uS17 (114 aa).

The protein belongs to the universal ribosomal protein uS17 family. As to quaternary structure, part of the 30S ribosomal subunit.

Functionally, one of the primary rRNA binding proteins, it binds specifically to the 5'-end of 16S ribosomal RNA. In Sulfolobus acidocaldarius (strain ATCC 33909 / DSM 639 / JCM 8929 / NBRC 15157 / NCIMB 11770), this protein is Small ribosomal subunit protein uS17.